Reading from the N-terminus, the 268-residue chain is Small ribosomal subunit protein uS2 (268 aa).

Positions 228–268 are disordered; the sequence is QLDSEQDYEDFDESISDEYDDYEDEEEYEEQDLEVDASEDE. Residues 231 to 268 are compositionally biased toward acidic residues; sequence SEQDYEDFDESISDEYDDYEDEEEYEEQDLEVDASEDE.

This sequence belongs to the universal ribosomal protein uS2 family.

The chain is Small ribosomal subunit protein uS2 from Rippkaea orientalis (strain PCC 8801 / RF-1) (Cyanothece sp. (strain PCC 8801)).